Here is a 224-residue protein sequence, read N- to C-terminus: MQLTSLPNSQRPREKLIEKGAKALSDAELLAIFLRTGLPGMNVIELAQHLLNENKTLHNLFNASMEEFCAQKGLGTAKYVQLQAVLELSQRYMQERCQRDAIFNSPNAVYDYLTLQMRGLQQEVFMVLYLDSQNRLIKDEILFYGTINSASVYPREVVKAALKNNAAAVIFAHNHPSGIAEPSQADKLITNKLQQALQLVDINVLDHIIVGGETCVSFAERGLI.

The MPN domain maps to 102–224 (IFNSPNAVYD…CVSFAERGLI (123 aa)). Zn(2+) is bound by residues His173, His175, and Asp186. A JAMM motif motif is present at residues 173 to 186 (HNHPSGIAEPSQAD).

It belongs to the UPF0758 family.

The sequence is that of UPF0758 protein PSHAa2643 from Pseudoalteromonas translucida (strain TAC 125).